The primary structure comprises 537 residues: Multidrug resistance protein Stp (537 aa).

14 helical membrane passes run 6 to 26, 46 to 66, 77 to 97, 104 to 124, 136 to 156, 163 to 183, 200 to 220, 223 to 243, 262 to 282, 300 to 320, 327 to 347, 352 to 372, 397 to 417, and 478 to 498; these read LLTL…ALIV, WVVA…ATLA, IGVS…SIAV, AQGL…SAAF, IWTA…GLLV, SIFY…LCYV, LLFI…PQIG, SVQT…FVWL, YALA…MLLL, LMIL…GHLV, VPIL…IFSE, ALVL…LTPI, AIGS…WLSA, and VALL…WRWF.

The protein belongs to the major facilitator superfamily. EmrB family.

The protein resides in the cell membrane. The protein is Multidrug resistance protein Stp (stp) of Mycobacterium tuberculosis (strain CDC 1551 / Oshkosh).